The following is a 332-amino-acid chain: Glycerol-3-phosphate dehydrogenase [NAD(P)+] (332 aa).

Positions 11, 12, 32, 33, and 106 each coordinate NADPH. K106 and G136 together coordinate sn-glycerol 3-phosphate. A140 serves as a coordination point for NADPH. K191, D244, S254, R255, and N256 together coordinate sn-glycerol 3-phosphate. K191 (proton acceptor) is an active-site residue. R255 lines the NADPH pocket. The NADPH site is built by V280 and E282.

The protein belongs to the NAD-dependent glycerol-3-phosphate dehydrogenase family.

The protein resides in the cytoplasm. It catalyses the reaction sn-glycerol 3-phosphate + NAD(+) = dihydroxyacetone phosphate + NADH + H(+). The enzyme catalyses sn-glycerol 3-phosphate + NADP(+) = dihydroxyacetone phosphate + NADPH + H(+). It functions in the pathway membrane lipid metabolism; glycerophospholipid metabolism. In terms of biological role, catalyzes the reduction of the glycolytic intermediate dihydroxyacetone phosphate (DHAP) to sn-glycerol 3-phosphate (G3P), the key precursor for phospholipid synthesis. The polypeptide is Glycerol-3-phosphate dehydrogenase [NAD(P)+] (Corynebacterium aurimucosum (strain ATCC 700975 / DSM 44827 / CIP 107346 / CN-1) (Corynebacterium nigricans)).